A 147-amino-acid polypeptide reads, in one-letter code: Large ribosomal subunit protein bL9 (147 aa).

This sequence belongs to the bacterial ribosomal protein bL9 family.

In terms of biological role, binds to the 23S rRNA. In Gemmatimonas aurantiaca (strain DSM 14586 / JCM 11422 / NBRC 100505 / T-27), this protein is Large ribosomal subunit protein bL9.